A 694-amino-acid chain; its full sequence is Elongation factor G (694 aa).

Residues 10–285 (EKTRNIGIMA…GVVDYLPSPL (276 aa)) enclose the tr-type G domain. Residues 19–26 (AHIDAGKT), 83–87 (DTPGH), and 137–140 (NKMD) each bind GTP.

It belongs to the TRAFAC class translation factor GTPase superfamily. Classic translation factor GTPase family. EF-G/EF-2 subfamily.

It is found in the cytoplasm. Catalyzes the GTP-dependent ribosomal translocation step during translation elongation. During this step, the ribosome changes from the pre-translocational (PRE) to the post-translocational (POST) state as the newly formed A-site-bound peptidyl-tRNA and P-site-bound deacylated tRNA move to the P and E sites, respectively. Catalyzes the coordinated movement of the two tRNA molecules, the mRNA and conformational changes in the ribosome. This chain is Elongation factor G, found in Lactobacillus delbrueckii subsp. bulgaricus (strain ATCC BAA-365 / Lb-18).